The sequence spans 107 residues: Replication initiation control protein YabA (107 aa).

4 residues coordinate Zn(2+): His-81, Cys-83, Cys-97, and Cys-100.

This sequence belongs to the YabA family. In terms of assembly, homotetramer. Interacts with both DnaA and DnaN, acting as a bridge between these two proteins. The cofactor is Zn(2+).

Its subcellular location is the cytoplasm. It localises to the nucleoid. Its function is as follows. Involved in control of chromosome replication initiation. Inhibits the cooperative binding of DnaA to the oriC region, thus negatively regulating initiation of chromosome replication. Inhibits the ability of DnaA-ATP to form a helix on DNA; does not disassemble preformed DnaA-DNA helices. Decreases the residence time of DnaA on the chromosome at its binding sites (oriC, replication forks and promoter-binding sites). Tethers DnaA to the replication machinery via the DNA polymerase beta sliding clamp subunit (dnaN). Associates with oriC and other DnaA targets on the chromosome in a DnaA-dependent manner. This chain is Replication initiation control protein YabA, found in Streptococcus equi subsp. zooepidemicus (strain MGCS10565).